We begin with the raw amino-acid sequence, 432 residues long: Homogentisate 1,2-dioxygenase (432 aa).

Catalysis depends on His-286, which acts as the Proton acceptor. Residues His-329 and Glu-335 each contribute to the Fe cation site. The homogentisate site is built by Tyr-344 and His-365. Residue His-365 participates in Fe cation binding.

This sequence belongs to the homogentisate dioxygenase family. Hexamer; dimer of trimers. Fe cation serves as cofactor.

The enzyme catalyses homogentisate + O2 = 4-maleylacetoacetate + H(+). It participates in amino-acid degradation; L-phenylalanine degradation; acetoacetate and fumarate from L-phenylalanine: step 4/6. Involved in the catabolism of homogentisate (2,5-dihydroxyphenylacetate or 2,5-OH-PhAc), a central intermediate in the degradation of phenylalanine and tyrosine. Catalyzes the oxidative ring cleavage of the aromatic ring of homogentisate to yield maleylacetoacetate. This is Homogentisate 1,2-dioxygenase from Bordetella bronchiseptica (strain ATCC BAA-588 / NCTC 13252 / RB50) (Alcaligenes bronchisepticus).